Here is a 386-residue protein sequence, read N- to C-terminus: CRISPR system endoribonuclease Csm6' (386 aa).

The segment at 1 to 146 (MRVLISAVGD…ASNENIGHDN (146 aa)) is CARF domain. The interval 147 to 386 (DENIDELIEV…LNKILLTKLN (240 aa)) is HEPN domain.

The protein belongs to the CRISPR-associated Csm6 family. Homodimer. The composite ssRNase active site is formed at the dimer interface.

With respect to regulation, non-specific ssRNase activity is stimulated about 1000-fold by cyclic oligoadenylate (cOA), a second messenger produced by Cas10 of the ternary Csm effector complex in the presence of a cognate target RNA. Its function is as follows. CRISPR (clustered regularly interspaced short palindromic repeat) is an adaptive immune system that provides protection against mobile genetic elements (viruses, transposable elements and conjugative plasmids). CRISPR clusters contain spacers, sequences complementary to antecedent mobile elements, and target invading nucleic acids. CRISPR clusters are transcribed and processed into CRISPR RNA (crRNA). The type III-A Csm complex binds crRNA and acts as a crRNA-guided RNase, DNase and cyclic oligoadenylate synthase; binding of target RNA cognate to the crRNA is required for all activities. In a heterologous host this Csm effector complex restricts ssRNA phage MS2, suggesting it may target RNA viruses in vivo. This protein is not part of the Csm complex. Csm functions as a non-specific ssDNase. Base-pairing between crRNA and target RNA to form a ternary Csm complex activates a ssDNase activity; target RNA cleavage suppresses the ssDNase, a temporal control that prevents uncontrolled DNA degradation. Viral RNA transcripts probably tether the Csm complex to the viral genome, recruiting Cas10 ssDNA activity which is able to degrade DNA in the transcription bubble, spatially controlling the DNase activity. In terms of biological role, a single-strand-specific endoribonuclease (ssRNase) that is approximately 1000-fold stimulated by cyclic oligoadenylate (cOA); although several species of cOA are synthesized by this organism only cyclic hexaadenylate (cA6) stimulates the ssRNase activity. Cleaves preferentially within GA or AA dinucleotides, although the presence of cA6 broadens the preference. The chain is CRISPR system endoribonuclease Csm6' from Streptococcus thermophilus.